The primary structure comprises 171 residues: MTNFTFDGAHSSLEFQIKHLMVSKVKGSFDQFDVAVEGDINDFSTLKATATIIPSSINTKNEARDNHLKSGDFFGTDEFDKITFETKSVTENKVVGDLTIKGITNEETFDVEFNGVSKNPMDGSQVTGVIVTGTINRENYGINFNQALETGGVMLGKDVKFEASAEFSISE.

This sequence belongs to the UPF0312 family.

The chain is UPF0312 protein SAV2687 from Staphylococcus aureus (strain Mu50 / ATCC 700699).